The chain runs to 1104 residues: Isoleucine--tRNA ligase (1104 aa).

The 'HIGH' region signature appears at 48–58 (PYTTGRIHLGT). The 'KMSKS' region motif lies at 644–648 (KMSKS). Residue Lys647 coordinates ATP.

The protein belongs to the class-I aminoacyl-tRNA synthetase family. IleS type 2 subfamily. Monomer. Zn(2+) serves as cofactor.

It is found in the cytoplasm. The enzyme catalyses tRNA(Ile) + L-isoleucine + ATP = L-isoleucyl-tRNA(Ile) + AMP + diphosphate. Its function is as follows. Catalyzes the attachment of isoleucine to tRNA(Ile). As IleRS can inadvertently accommodate and process structurally similar amino acids such as valine, to avoid such errors it has two additional distinct tRNA(Ile)-dependent editing activities. One activity is designated as 'pretransfer' editing and involves the hydrolysis of activated Val-AMP. The other activity is designated 'posttransfer' editing and involves deacylation of mischarged Val-tRNA(Ile). In Methanocella arvoryzae (strain DSM 22066 / NBRC 105507 / MRE50), this protein is Isoleucine--tRNA ligase.